We begin with the raw amino-acid sequence, 290 residues long: Ribosomal protein L11 methyltransferase (290 aa).

The S-adenosyl-L-methionine site is built by T136, G159, D181, and N228.

It belongs to the methyltransferase superfamily. PrmA family.

It localises to the cytoplasm. It catalyses the reaction L-lysyl-[protein] + 3 S-adenosyl-L-methionine = N(6),N(6),N(6)-trimethyl-L-lysyl-[protein] + 3 S-adenosyl-L-homocysteine + 3 H(+). Its function is as follows. Methylates ribosomal protein L11. This chain is Ribosomal protein L11 methyltransferase, found in Allorhizobium ampelinum (strain ATCC BAA-846 / DSM 112012 / S4) (Agrobacterium vitis (strain S4)).